The primary structure comprises 343 residues: Undecaprenyl-diphosphatase 2 (343 aa).

Transmembrane regions (helical) follow at residues 21–41 (LFPVSSLGHSVLIPALIGGSW), 57–77 (PYLTFVVGLHVATAVALLVFF), 104–124 (LAWLIVAATVPVGIIGLALEH), and 129–149 (LFAKPLAAALFLTANGMILLA). The span at 179 to 193 (VPAPATVPTQTTSAP) shows a compositional bias: low complexity. The interval 179 to 202 (VPAPATVPTQTTSAPGGRATARHT) is disordered. 4 helical membrane-spanning segments follow: residues 225 to 245 (AGVIGLFQTLALLAGISRSGI), 265 to 285 (FLLATPVILAAGLLKLPALAG), 294 to 314 (QVILGALIAGIAAYLSIRFLV), and 322 to 342 (LTPFAIYCLLTGALCTVRFAI).

This sequence belongs to the UppP family.

Its subcellular location is the cell membrane. It carries out the reaction di-trans,octa-cis-undecaprenyl diphosphate + H2O = di-trans,octa-cis-undecaprenyl phosphate + phosphate + H(+). Functionally, catalyzes the dephosphorylation of undecaprenyl diphosphate (UPP). Confers resistance to bacitracin. The chain is Undecaprenyl-diphosphatase 2 from Frankia alni (strain DSM 45986 / CECT 9034 / ACN14a).